The primary structure comprises 297 residues: GTPase Era (297 aa).

Residues 7 to 174 enclose the Era-type G domain; that stretch reads RSGFVSIVGR…VQLVHGLLPE (168 aa). A G1 region spans residues 15–22; the sequence is GRPNVGKS. A GTP-binding site is contributed by 15–22; that stretch reads GRPNVGKS. Positions 41-45 are G2; it reads QTTRN. The segment at 62 to 65 is G3; the sequence is DTPG. GTP contacts are provided by residues 62-66 and 124-127; these read DTPGI and NKID. Residues 124 to 127 form a G4 region; it reads NKID. A G5 region spans residues 153 to 155; that stretch reads VSA. The region spanning 205–282 is the KH type-2 domain; it reads THDEVPYSTA…FLELFVRVSG (78 aa).

Belongs to the TRAFAC class TrmE-Era-EngA-EngB-Septin-like GTPase superfamily. Era GTPase family. Monomer.

It localises to the cytoplasm. It is found in the cell inner membrane. In terms of biological role, an essential GTPase that binds both GDP and GTP, with rapid nucleotide exchange. Plays a role in 16S rRNA processing and 30S ribosomal subunit biogenesis and possibly also in cell cycle regulation and energy metabolism. The sequence is that of GTPase Era from Geobacter sp. (strain M21).